A 326-amino-acid chain; its full sequence is GTPase Obg (326 aa).

Residues 1–159 enclose the Obg domain; sequence MKFVDSAKIY…LEIELELKLM (159 aa). Residues 119–138 are disordered; the sequence is EGGKGGKGNPHFASSTRQAP. Residues 160 to 323 enclose the OBG-type G domain; that stretch reads ADVGLVGFPN…LKDELWSRVK (164 aa). Residues 166 to 173, 191 to 195, 213 to 216, 280 to 283, and 304 to 306 each bind GTP; these read GFPNAGKS, FTTLV, DIPG, TKMD, and SSV. The Mg(2+) site is built by Ser173 and Thr193.

It belongs to the TRAFAC class OBG-HflX-like GTPase superfamily. OBG GTPase family. As to quaternary structure, monomer. The cofactor is Mg(2+).

It localises to the cytoplasm. Its function is as follows. An essential GTPase which binds GTP, GDP and possibly (p)ppGpp with moderate affinity, with high nucleotide exchange rates and a fairly low GTP hydrolysis rate. Plays a role in control of the cell cycle, stress response, ribosome biogenesis and in those bacteria that undergo differentiation, in morphogenesis control. The polypeptide is GTPase Obg (Chlorobium phaeobacteroides (strain BS1)).